Here is a 230-residue protein sequence, read N- to C-terminus: Translation initiation factor IF-3 (230 aa).

Disordered regions lie at residues 1 to 21 (MAIQHRDPRGGGGSRDARTNR) and 184 to 230 (LQSQ…AAQR). Positions 193–208 (AAAAAAPAAAPAAGAP) are enriched in low complexity. Positions 209–220 (APAPAPAAPAPA) are enriched in pro residues. The segment covering 221–230 (PTAADPAAQR) has biased composition (low complexity).

This sequence belongs to the IF-3 family. As to quaternary structure, monomer.

Its subcellular location is the cytoplasm. IF-3 binds to the 30S ribosomal subunit and shifts the equilibrium between 70S ribosomes and their 50S and 30S subunits in favor of the free subunits, thus enhancing the availability of 30S subunits on which protein synthesis initiation begins. The protein is Translation initiation factor IF-3 of Anaeromyxobacter dehalogenans (strain 2CP-1 / ATCC BAA-258).